Reading from the N-terminus, the 188-residue chain is Elongation factor P (188 aa).

This sequence belongs to the elongation factor P family.

The protein localises to the cytoplasm. It participates in protein biosynthesis; polypeptide chain elongation. Functionally, involved in peptide bond synthesis. Stimulates efficient translation and peptide-bond synthesis on native or reconstituted 70S ribosomes in vitro. Probably functions indirectly by altering the affinity of the ribosome for aminoacyl-tRNA, thus increasing their reactivity as acceptors for peptidyl transferase. This Rickettsia africae (strain ESF-5) protein is Elongation factor P.